The primary structure comprises 1070 residues: DNA-directed RNA polymerase subunit beta (1070 aa).

The protein belongs to the RNA polymerase beta chain family. As to quaternary structure, in plastids the minimal PEP RNA polymerase catalytic core is composed of four subunits: alpha, beta, beta', and beta''. When a (nuclear-encoded) sigma factor is associated with the core the holoenzyme is formed, which can initiate transcription.

It localises to the plastid. It is found in the chloroplast. It carries out the reaction RNA(n) + a ribonucleoside 5'-triphosphate = RNA(n+1) + diphosphate. Its function is as follows. DNA-dependent RNA polymerase catalyzes the transcription of DNA into RNA using the four ribonucleoside triphosphates as substrates. The chain is DNA-directed RNA polymerase subunit beta from Dioscorea elephantipes (Elephant's foot yam).